An 804-amino-acid chain; its full sequence is Probable phosphoketolase (804 aa).

It belongs to the XFP family. Thiamine diphosphate is required as a cofactor.

The polypeptide is Probable phosphoketolase (Mycolicibacterium paratuberculosis (strain ATCC BAA-968 / K-10) (Mycobacterium paratuberculosis)).